Reading from the N-terminus, the 199-residue chain is Ras-related and estrogen-regulated growth inhibitor (199 aa).

Residues 13–20, 60–64, and 118–121 contribute to the GTP site; these read GRAGVGKS, DTAGQ, and NKAD.

Belongs to the small GTPase superfamily. Ras family. Detected in heart, brain, placenta, lung, liver, skin, kidney and pancreas. Detected in estrogen receptor-positive breast-derived cell lines, but not in estrogen receptor-negative cell lines. Expression is decreased or lost in a significant proportion of primary breast tumors with poor clinical prognosis.

The protein localises to the cytoplasm. It carries out the reaction GTP + H2O = GDP + phosphate + H(+). Functionally, binds GDP/GTP and possesses intrinsic GTPase activity. Has higher affinity for GDP than for GTP. In cell lines overexpression leads to a reduction in the rate of proliferation, colony formation and in tumorigenic potential. This is Ras-related and estrogen-regulated growth inhibitor (RERG) from Homo sapiens (Human).